The primary structure comprises 88 residues: Small ribosomal subunit protein uS15 (88 aa).

Belongs to the universal ribosomal protein uS15 family. As to quaternary structure, part of the 30S ribosomal subunit. Forms a bridge to the 50S subunit in the 70S ribosome, contacting the 23S rRNA.

In terms of biological role, one of the primary rRNA binding proteins, it binds directly to 16S rRNA where it helps nucleate assembly of the platform of the 30S subunit by binding and bridging several RNA helices of the 16S rRNA. Its function is as follows. Forms an intersubunit bridge (bridge B4) with the 23S rRNA of the 50S subunit in the ribosome. The chain is Small ribosomal subunit protein uS15 from Leptospira interrogans serogroup Icterohaemorrhagiae serovar copenhageni (strain Fiocruz L1-130).